A 265-amino-acid chain; its full sequence is 14-3-3-like protein GF14-D (265 aa).

Residues 244–265 (DANDDGGDEIKEAAAPKEPGDQ) are disordered. Over residues 251–265 (DEIKEAAAPKEPGDQ) the composition is skewed to basic and acidic residues.

It belongs to the 14-3-3 family. Interacts with BZR1. Interacts with ABI5.

Its function is as follows. Is associated with a DNA binding complex that binds to the G box, a well-characterized cis-acting DNA regulatory element found in plant genes. The polypeptide is 14-3-3-like protein GF14-D (GF14D) (Oryza sativa subsp. japonica (Rice)).